Consider the following 158-residue polypeptide: Glutathione peroxidase homolog BsaA (158 aa).

Residue Cys36 is part of the active site.

This sequence belongs to the glutathione peroxidase family.

In Staphylococcus aureus (strain COL), this protein is Glutathione peroxidase homolog BsaA (bsaA).